The chain runs to 364 residues: Chorismate synthase (364 aa).

2 residues coordinate NADP(+): Arg-48 and Arg-54. FMN contacts are provided by residues 125–127, 238–239, Gly-278, 293–297, and Arg-319; these read RSS, NA, and KPTSS.

This sequence belongs to the chorismate synthase family. In terms of assembly, homotetramer. Requires FMNH2 as cofactor.

The enzyme catalyses 5-O-(1-carboxyvinyl)-3-phosphoshikimate = chorismate + phosphate. It participates in metabolic intermediate biosynthesis; chorismate biosynthesis; chorismate from D-erythrose 4-phosphate and phosphoenolpyruvate: step 7/7. Functionally, catalyzes the anti-1,4-elimination of the C-3 phosphate and the C-6 proR hydrogen from 5-enolpyruvylshikimate-3-phosphate (EPSP) to yield chorismate, which is the branch point compound that serves as the starting substrate for the three terminal pathways of aromatic amino acid biosynthesis. This reaction introduces a second double bond into the aromatic ring system. This chain is Chorismate synthase, found in Shewanella frigidimarina (strain NCIMB 400).